Here is a 505-residue protein sequence, read N- to C-terminus: Maturase K (505 aa).

It belongs to the intron maturase 2 family. MatK subfamily.

The protein localises to the plastid. It is found in the chloroplast. Its function is as follows. Usually encoded in the trnK tRNA gene intron. Probably assists in splicing its own and other chloroplast group II introns. This chain is Maturase K, found in Dioon edule (Virgin's palm).